A 278-amino-acid chain; its full sequence is Orotidine 5'-phosphate decarboxylase (278 aa).

The active-site Proton donor is the Lys-95.

The protein belongs to the OMP decarboxylase family. Type 2 subfamily.

The catalysed reaction is orotidine 5'-phosphate + H(+) = UMP + CO2. The protein operates within pyrimidine metabolism; UMP biosynthesis via de novo pathway; UMP from orotate: step 2/2. The chain is Orotidine 5'-phosphate decarboxylase from Methylibium petroleiphilum (strain ATCC BAA-1232 / LMG 22953 / PM1).